Reading from the N-terminus, the 913-residue chain is Anoctamin-5 (913 aa).

The Cytoplasmic portion of the chain corresponds to 1–299 (MGDPDLLEVL…DLIKNYYGEK (299 aa)). The helical transmembrane segment at 300–320 (IGIYFVFLGFYTEMLFFAAVV) threads the bilayer. At 321–380 (GLACFIYGLLSMEHNTSSTEICDPEIGGQMIMCPLCDQVCDYWRLNSTCLASKFSHLFDN) the chain is on the extracellular side. N-linked (GlcNAc...) asparagine glycans are attached at residues Asn-335, Asn-366, and Asn-380. Residues 381 to 401 (ESTVFFAIFMGIWVTLFLEFW) form a helical membrane-spanning segment. The Cytoplasmic portion of the chain corresponds to 402–462 (KQRQARLEYE…YTRIPWYFLS (61 aa)). The chain crosses the membrane as a helical span at residues 463–483 (GATVTLWMSLVVTSMVAVIVY). Residues 484–511 (RLSVFATFASFMESDASLKQVKSFLTPQ) are Extracellular-facing. The helical transmembrane segment at 512–532 (ITTSLTGSCLNFIVILILNFF) threads the bilayer. Residues 533 to 557 (YEKISAWITKMEIPRTYQEYESSLT) are Cytoplasmic-facing. A helical transmembrane segment spans residues 558-578 (LKMFLFQFVNFYSSCFYVAFF). Topologically, residues 579 to 679 (KGKFVGYPGK…FYEYLETVTQ (101 aa)) are extracellular. A helical membrane pass occupies residues 680–700 (FGFVTLFVASFPLAPLLALIN). The Cytoplasmic portion of the chain corresponds to 701–732 (NIVEIRVDAWKLTTQYRRTVASKAHSIGVWQD). The chain crosses the membrane as a helical span at residues 733–753 (ILYGMAVLSVATNAFIVAFTS). Residues 754–834 (DIIPRLVYYY…FWHVLAAKMT (81 aa)) lie on the Extracellular side of the membrane. Asn-768, Asn-778, and Asn-791 each carry an N-linked (GlcNAc...) asparagine glycan. Residues 835–855 (FIIVMEHVVFLVKFLLAWMIP) form a helical membrane-spanning segment. Topologically, residues 856 to 913 (DVPKDVVERIKREKLMTIKILHDFELNKLKENLGINSNEFAKHVMIEENKAQLAKSTL) are cytoplasmic.

It belongs to the anoctamin family. Highly expressed in brain, heart, kidney, lung, and skeletal muscle. Weakly expressed in bone marrow, fetal liver, placenta, spleen, thymus, osteoblasts and periodontal ligament cells.

The protein resides in the endoplasmic reticulum membrane. Its subcellular location is the cell membrane. Plays a role in plasma membrane repair in a process involving annexins. Does not exhibit calcium-activated chloride channel (CaCC) activity. In Homo sapiens (Human), this protein is Anoctamin-5 (ANO5).